Here is a 229-residue protein sequence, read N- to C-terminus: Isopentenyl-diphosphate delta-isomerase (229 aa).

Position 39 (lysine 39) interacts with substrate. Residues histidine 43 and histidine 54 each contribute to the Mg(2+) site. One can recognise a Nudix hydrolase domain in the interval 52-202 (LLHRAFSMFI…QYGFTPWFKL (151 aa)). Substrate-binding residues include glutamine 72 and lysine 77. Cysteine 89 is a catalytic residue. Serine 90 contacts substrate. 2 residues coordinate Mg(2+): glutamate 152 and glutamate 154. The active site involves glutamate 154.

This sequence belongs to the IPP isomerase type 1 family. The cofactor is Mg(2+).

It is found in the cytoplasm. The protein resides in the nucleus. It catalyses the reaction isopentenyl diphosphate = dimethylallyl diphosphate. The protein operates within isoprenoid biosynthesis; dimethylallyl diphosphate biosynthesis; dimethylallyl diphosphate from isopentenyl diphosphate: step 1/1. Functionally, isopentenyl-diphosphate delta-isomerase; part of the second module of ergosterol biosynthesis pathway that includes the middle steps of the pathway. Idi1 catalyzes the 1,3-allylic rearrangement of isopentenyl (IPP) to its highly electrophilic allylic isomer, dimethylallyl diphosphate (DMAPP). The second module is carried out in the vacuole and involves the formation of farnesyl diphosphate, which is also an important intermediate in the biosynthesis of ubiquinone, dolichol, heme and prenylated proteins. Activity by the mevalonate kinase erg12 first converts mevalonate into 5-phosphomevalonate. 5-phosphomevalonate is then further converted to 5-diphosphomevalonate by the phosphomevalonate kinase erg8. The diphosphomevalonate decarboxylase mvd1 then produces isopentenyl diphosphate. The isopentenyl-diphosphate delta-isomerase idi1 then catalyzes the 1,3-allylic rearrangement of the homoallylic substrate isopentenyl (IPP) to its highly electrophilic allylic isomer, dimethylallyl diphosphate (DMAPP). Finally the farnesyl diphosphate synthase fps1 catalyzes the sequential condensation of isopentenyl pyrophosphate with dimethylallyl pyrophosphate, and then with the resultant geranylpyrophosphate to the ultimate product farnesyl pyrophosphate. The protein is Isopentenyl-diphosphate delta-isomerase of Schizosaccharomyces pombe (strain 972 / ATCC 24843) (Fission yeast).